We begin with the raw amino-acid sequence, 417 residues long: NADH-quinone oxidoreductase subunit D (417 aa).

It belongs to the complex I 49 kDa subunit family. As to quaternary structure, NDH-1 is composed of 14 different subunits. Subunits NuoB, C, D, E, F, and G constitute the peripheral sector of the complex.

It is found in the cell inner membrane. The catalysed reaction is a quinone + NADH + 5 H(+)(in) = a quinol + NAD(+) + 4 H(+)(out). Functionally, NDH-1 shuttles electrons from NADH, via FMN and iron-sulfur (Fe-S) centers, to quinones in the respiratory chain. The immediate electron acceptor for the enzyme in this species is believed to be ubiquinone. Couples the redox reaction to proton translocation (for every two electrons transferred, four hydrogen ions are translocated across the cytoplasmic membrane), and thus conserves the redox energy in a proton gradient. This is NADH-quinone oxidoreductase subunit D from Acidithiobacillus ferrooxidans (strain ATCC 53993 / BNL-5-31) (Leptospirillum ferrooxidans (ATCC 53993)).